Consider the following 221-residue polypeptide: MAKVDLFNIKGENIGTVELKEEVFAIEPNQDVMWRYIDMQLTNSRAGTASTKTRGEVSGGGRKPWIQKHTGRARQGSIRAPHWRHGGVAHGPKPRVYFKRLNKKMKRLALKSALSLRLKENNLVVVDDIKFEKPRTKDLREVLKNLGLENQKVLIVLPKKESEYENVKISGRNIPGVKVLIADNPGVDRVNIDGLNVYDILNHDKLVLLQGTVQKIEEVLG.

Residues 47 to 77 (GTASTKTRGEVSGGGRKPWIQKHTGRARQGS) are disordered.

The protein belongs to the universal ribosomal protein uL4 family. In terms of assembly, part of the 50S ribosomal subunit.

Its function is as follows. One of the primary rRNA binding proteins, this protein initially binds near the 5'-end of the 23S rRNA. It is important during the early stages of 50S assembly. It makes multiple contacts with different domains of the 23S rRNA in the assembled 50S subunit and ribosome. Functionally, forms part of the polypeptide exit tunnel. The polypeptide is Large ribosomal subunit protein uL4 (Thermosipho melanesiensis (strain DSM 12029 / CIP 104789 / BI429)).